The following is a 341-amino-acid chain: Aspartate carbamoyltransferase catalytic subunit (341 aa).

Residues Arg89 and Thr90 each coordinate carbamoyl phosphate. L-aspartate is bound at residue Lys117. Carbamoyl phosphate-binding residues include Arg139, His169, and Gln172. Residues Arg202 and Arg257 each contribute to the L-aspartate site. 2 residues coordinate carbamoyl phosphate: Gly298 and Pro299.

Belongs to the aspartate/ornithine carbamoyltransferase superfamily. ATCase family. As to quaternary structure, heterododecamer (2C3:3R2) of six catalytic PyrB chains organized as two trimers (C3), and six regulatory PyrI chains organized as three dimers (R2).

It carries out the reaction carbamoyl phosphate + L-aspartate = N-carbamoyl-L-aspartate + phosphate + H(+). The protein operates within pyrimidine metabolism; UMP biosynthesis via de novo pathway; (S)-dihydroorotate from bicarbonate: step 2/3. Catalyzes the condensation of carbamoyl phosphate and aspartate to form carbamoyl aspartate and inorganic phosphate, the committed step in the de novo pyrimidine nucleotide biosynthesis pathway. This is Aspartate carbamoyltransferase catalytic subunit from Paraburkholderia phytofirmans (strain DSM 17436 / LMG 22146 / PsJN) (Burkholderia phytofirmans).